Reading from the N-terminus, the 144-residue chain is 3-hydroxyacyl-[acyl-carrier-protein] dehydratase FabZ (144 aa).

His48 is a catalytic residue.

The protein belongs to the thioester dehydratase family. FabZ subfamily.

Its subcellular location is the cytoplasm. It carries out the reaction a (3R)-hydroxyacyl-[ACP] = a (2E)-enoyl-[ACP] + H2O. Functionally, involved in unsaturated fatty acids biosynthesis. Catalyzes the dehydration of short chain beta-hydroxyacyl-ACPs and long chain saturated and unsaturated beta-hydroxyacyl-ACPs. This Listeria welshimeri serovar 6b (strain ATCC 35897 / DSM 20650 / CCUG 15529 / CIP 8149 / NCTC 11857 / SLCC 5334 / V8) protein is 3-hydroxyacyl-[acyl-carrier-protein] dehydratase FabZ.